The primary structure comprises 457 residues: UDP-N-acetylmuramate--L-alanine ligase (457 aa).

117–123 is a binding site for ATP; it reads GTHGKTT.

The protein belongs to the MurCDEF family.

It localises to the cytoplasm. It carries out the reaction UDP-N-acetyl-alpha-D-muramate + L-alanine + ATP = UDP-N-acetyl-alpha-D-muramoyl-L-alanine + ADP + phosphate + H(+). Its pathway is cell wall biogenesis; peptidoglycan biosynthesis. In terms of biological role, cell wall formation. The protein is UDP-N-acetylmuramate--L-alanine ligase of Clostridium kluyveri (strain NBRC 12016).